The chain runs to 404 residues: Sorting nexin-32 (404 aa).

Residues 1–10 (MEEQHQEAGN) are compositionally biased toward basic and acidic residues. The segment at 1–29 (MEEQHQEAGNESKPSSTSVDLQGDSPLQV) is disordered. A compositionally biased stretch (polar residues) spans 11–20 (ESKPSSTSVD). The PX domain occupies 21 to 168 (LQGDSPLQVE…SVFLEYSQDL (148 aa)). Residues 255-336 (TQEVNQLKRS…KARTRNREVR (82 aa)) adopt a coiled-coil conformation.

Belongs to the sorting nexin family.

In terms of biological role, may be involved in several stages of intracellular trafficking. The protein is Sorting nexin-32 (Snx32) of Mus musculus (Mouse).